A 343-amino-acid polypeptide reads, in one-letter code: Probable dual-specificity RNA methyltransferase RlmN (343 aa).

The Proton acceptor role is filled by Glu-83. Positions 89–323 (YLDRKTICVS…VSVRRSRGKD (235 aa)) constitute a Radical SAM core domain. Cys-96 and Cys-328 are joined by a disulfide. Cys-103, Cys-107, and Cys-110 together coordinate [4Fe-4S] cluster. S-adenosyl-L-methionine is bound by residues 153-154 (GE), Ser-185, 209-211 (SLH), and Asn-285. Catalysis depends on Cys-328, which acts as the S-methylcysteine intermediate.

The protein belongs to the radical SAM superfamily. RlmN family. [4Fe-4S] cluster serves as cofactor.

The protein localises to the cytoplasm. It carries out the reaction adenosine(2503) in 23S rRNA + 2 reduced [2Fe-2S]-[ferredoxin] + 2 S-adenosyl-L-methionine = 2-methyladenosine(2503) in 23S rRNA + 5'-deoxyadenosine + L-methionine + 2 oxidized [2Fe-2S]-[ferredoxin] + S-adenosyl-L-homocysteine. The catalysed reaction is adenosine(37) in tRNA + 2 reduced [2Fe-2S]-[ferredoxin] + 2 S-adenosyl-L-methionine = 2-methyladenosine(37) in tRNA + 5'-deoxyadenosine + L-methionine + 2 oxidized [2Fe-2S]-[ferredoxin] + S-adenosyl-L-homocysteine. In terms of biological role, specifically methylates position 2 of adenine 2503 in 23S rRNA and position 2 of adenine 37 in tRNAs. The protein is Probable dual-specificity RNA methyltransferase RlmN of Deinococcus deserti (strain DSM 17065 / CIP 109153 / LMG 22923 / VCD115).